Consider the following 984-residue polypeptide: Putative formate dehydrogenase SAB2186c (984 aa).

In terms of domain architecture, 2Fe-2S ferredoxin-type spans Glu-3–Asp-79. The [2Fe-2S] cluster site is built by Cys-37, Cys-48, Cys-51, and Cys-63. Positions Asp-79–Gly-119 constitute a 4Fe-4S His(Cys)3-ligated-type domain. 16 residues coordinate [4Fe-4S] cluster: His-95, Cys-99, Cys-102, Cys-109, Cys-147, Cys-150, Cys-153, Cys-157, Cys-190, Cys-193, Cys-196, Cys-200, Cys-264, Cys-267, Cys-271, and Cys-299. 4Fe-4S ferredoxin-type domains follow at residues Pro-138–Thr-165 and Asn-181–Glu-211. The segment at Met-252 to Lys-984 is formate dehydrogenase. The 4Fe-4S Mo/W bis-MGD-type domain maps to Ile-257–Gln-313.

It in the C-terminal section; belongs to the prokaryotic molybdopterin-containing oxidoreductase family. The cofactor is [2Fe-2S] cluster. Requires [4Fe-4S] cluster as cofactor. Mo-bis(molybdopterin guanine dinucleotide) is required as a cofactor.

The catalysed reaction is formate + NAD(+) = CO2 + NADH. The sequence is that of Putative formate dehydrogenase SAB2186c from Staphylococcus aureus (strain bovine RF122 / ET3-1).